Here is a 196-residue protein sequence, read N- to C-terminus: ATP-dependent Clp protease proteolytic subunit (196 aa).

The Nucleophile role is filled by Ser101. The active site involves His126.

The protein belongs to the peptidase S14 family. Component of the chloroplastic Clp protease core complex.

Its subcellular location is the plastid. The protein localises to the chloroplast stroma. The catalysed reaction is Hydrolysis of proteins to small peptides in the presence of ATP and magnesium. alpha-casein is the usual test substrate. In the absence of ATP, only oligopeptides shorter than five residues are hydrolyzed (such as succinyl-Leu-Tyr-|-NHMec, and Leu-Tyr-Leu-|-Tyr-Trp, in which cleavage of the -Tyr-|-Leu- and -Tyr-|-Trp bonds also occurs).. In terms of biological role, cleaves peptides in various proteins in a process that requires ATP hydrolysis. Has a chymotrypsin-like activity. Plays a major role in the degradation of misfolded proteins. This is ATP-dependent Clp protease proteolytic subunit from Vitis vinifera (Grape).